Reading from the N-terminus, the 464-residue chain is RYamide receptor (464 aa).

The Extracellular segment spans residues 1 to 105; sequence MEHHNSHLLP…EDMWSSAYFK (105 aa). Asn-49, Asn-79, and Asn-85 each carry an N-linked (GlcNAc...) asparagine glycan. The helical transmembrane segment at 106–126 threads the bilayer; sequence IIVYMLYIPIFIFALIGNGTV. Residues 127-148 are Cytoplasmic-facing; the sequence is CYIVYSTPRMRTVTNYFIASLA. Residues 149–169 form a helical membrane-spanning segment; the sequence is IGDILMSFFCVPSSFISLFIL. Over 170 to 189 the chain is Extracellular; sequence NYWPFGLALCHFVNYSQAVS. Asn-183 is a glycosylation site (N-linked (GlcNAc...) asparagine). A helical transmembrane segment spans residues 190 to 210; sequence VLVSAYTLVAISIDRYIAIMW. The Cytoplasmic portion of the chain corresponds to 211–221; the sequence is PLKPRITKRYA. A helical membrane pass occupies residues 222 to 242; the sequence is TFIIAGVWFIALATALPIPIV. Topologically, residues 243-274 are extracellular; the sequence is SGLDIPMSPWHTKCEKYICREMWPSRTQEYYY. A helical membrane pass occupies residues 275 to 295; the sequence is TLSLFALQFVVPLGVLIFTYA. Over 296–329 the chain is Cytoplasmic; the sequence is RITIRVWAKRPPGEAETNRDQRMARSKRKMVKMM. A helical transmembrane segment spans residues 330–350; that stretch reads LTVVIVFTCCWLPFNILQLLL. Residues 351–363 lie on the Extracellular side of the membrane; it reads NDEEFAHWDPLPY. The chain crosses the membrane as a helical span at residues 364–384; sequence VWFAFHWLAMSHCCYNPIIYC. Topologically, residues 385-464 are cytoplasmic; it reads YMNARFRSGF…LSCGETSPLR (80 aa).

This sequence belongs to the G-protein coupled receptor 1 family.

It localises to the cell membrane. Receptor for the neuropeptides RYamide-1 and RYamide-2. The activity of this receptor is mediated by G proteins which activate a phosphatidyl-inositol-calcium second messenger system. RYamide signaling may suppress feeding behavior. The polypeptide is RYamide receptor (Drosophila melanogaster (Fruit fly)).